The sequence spans 164 residues: UPF0114 protein YqhA (164 aa).

The next 3 membrane-spanning stretches (helical) occupy residues 15–35, 53–73, and 136–156; these read LLAP…LKFF, LILV…LVMV, and LMWY…MGYL.

This sequence belongs to the UPF0114 family.

It localises to the cell membrane. In Salmonella dublin (strain CT_02021853), this protein is UPF0114 protein YqhA.